The chain runs to 586 residues: MFKVIKCNELNEKLINKKVEINAWVKKIRHHGKFIFLNIRDRYEKAQVLITEEHLLKIAEKIKLEYCIKIQGLLSKRPPNMINENMKTGSFEILAKNIEIISKCNELPFMIEDDNNASENSKLKYRYLDLRRDSLKNKIILRCQATHLIRNFLVKKKFLELETPTFVKSTPEGARDFVIPSRIHKGSFYALPQSPQLYKQLIMIAGFDKYFQIARCYRDEDSRGDRQPEFTQLDLEMSFVKKENIFKLIENMLFLIFKNCLNIKLPKKFKKITYKTAMNKYGSDKPDTRFELTLQDISRNLKNSEFNVFKETLKNKGSIKILIVKDEADKFSRAKINNLEEIAKLYKTQGLYFAKIENNKFSGGIAKFLKTEEQQLIKTYSLENNDIIFFTANKKWETACKAMGQIRIKIANDLGLIDENKFEFLWVYDFPLFEYDENTKTYTPAHHMFSLPKKRYIASLEKIPNKTIGEIYDLVLNGVELGSGSIRIHNKELQQRIFNIIGFQKEKSEDRFGFFLKALEYGAPNHGGIAIGIDRLIMLMTKSTSIKDVILFPKNSFATSPLDDSPSKISNEQLKELGINIVTDDA.

Glu-172 contacts L-aspartate. Residues 196-199 (QLYK) form an aspartate region. Position 218 (Arg-218) interacts with L-aspartate. Residues 218-220 (RDE) and Gln-227 each bind ATP. L-aspartate is bound at residue His-446. Glu-480 lines the ATP pocket. Residue Arg-487 participates in L-aspartate binding. 532–535 (GIDR) serves as a coordination point for ATP.

This sequence belongs to the class-II aminoacyl-tRNA synthetase family. Type 1 subfamily. As to quaternary structure, homodimer.

The protein localises to the cytoplasm. It carries out the reaction tRNA(Asx) + L-aspartate + ATP = L-aspartyl-tRNA(Asx) + AMP + diphosphate. In terms of biological role, aspartyl-tRNA synthetase with relaxed tRNA specificity since it is able to aspartylate not only its cognate tRNA(Asp) but also tRNA(Asn). Reaction proceeds in two steps: L-aspartate is first activated by ATP to form Asp-AMP and then transferred to the acceptor end of tRNA(Asp/Asn). This chain is Aspartate--tRNA(Asp/Asn) ligase, found in Borrelia garinii subsp. bavariensis (strain ATCC BAA-2496 / DSM 23469 / PBi) (Borreliella bavariensis).